The primary structure comprises 478 residues: Proline--tRNA ligase (478 aa).

It belongs to the class-II aminoacyl-tRNA synthetase family. ProS type 3 subfamily. Homodimer.

It localises to the cytoplasm. It catalyses the reaction tRNA(Pro) + L-proline + ATP = L-prolyl-tRNA(Pro) + AMP + diphosphate. Its function is as follows. Catalyzes the attachment of proline to tRNA(Pro) in a two-step reaction: proline is first activated by ATP to form Pro-AMP and then transferred to the acceptor end of tRNA(Pro). The polypeptide is Proline--tRNA ligase (Clostridium botulinum (strain Loch Maree / Type A3)).